We begin with the raw amino-acid sequence, 1338 residues long: Centrosomal P4.1-associated protein (1338 aa).

Disordered regions lie at residues 78–99 (QKLE…HTGF) and 190–211 (GLSL…TTTG). Phosphoserine occurs at positions 260 and 317. The alpha/beta-tubulin binding stretch occupies residues 320 to 395 (VANIEERPIK…FTNAKSKFQK (76 aa)). 3 disordered regions span residues 387–415 (TNAK…PLFK), 437–480 (PILK…QTGK), and 522–552 (QGKD…ESES). The span at 401-410 (LVTNQSTSED) shows a compositional bias: polar residues. S541 is modified (phosphoserine). Over residues 542 to 551 (PIRETMKESE) the composition is skewed to basic and acidic residues. Phosphoserine; by PLK2 is present on residues S590 and S596. 3 disordered regions span residues 612-790 (HRMS…LSMS), 846-903 (VKRG…DNAR), and 1088-1158 (TQVE…HPDG). A compositionally biased stretch (basic and acidic residues) spans 636 to 651 (NRSEDLDHTAREKESE). Over residues 680 to 690 (QKSTSENQTEW) the composition is skewed to polar residues. Positions 718-765 (STEDRERGISSREDSPQVCDDKGPFKDTRTQEDKRRDVDLDLSDKDYS) are enriched in basic and acidic residues. The residue at position 760 (S760) is a Phosphoserine. Residues 781 to 790 (PSRSSSLSMS) are compositionally biased toward low complexity. The interaction with STIL stretch occupies residues 896 to 1338 (QPPGDNARSQ…EGNVLMDTEL (443 aa)).

Belongs to the TCP10 family. In terms of assembly, forms homodimers. Associates with microtubules plus ends; binds to beta-tubulin subunits exposed on microtubule outer surface at its distal tip; also associates with microtubule lattice. Associated with the gamma-tubulin complex. Interacts with the head domain of EPB41. Interacts with LYST. Interacts with CEP152 (via C-terminus). Interacts with STIL. Forms a complex with STIL and SASS6. In terms of processing, phosphorylation at Ser-590 and Ser-596 by PLK2 is required for procentriole formation and centriole elongation. Phosphorylation by PLK2 oscillates during the cell cycle: it increases at G1/S transition and decreases during the exit from mitosis. Phosphorylation at Ser-596 is also mediated by PLK4 but is not a critical step in PLK4 function in procentriole assembly.

The protein localises to the cytoplasm. Its subcellular location is the cytoskeleton. The protein resides in the microtubule organizing center. It localises to the centrosome. It is found in the centriole. Functionally, plays an important role in cell division and centrosome function by participating in centriole duplication. Inhibits microtubule nucleation from the centrosome. Involved in the regulation of slow processive growth of centriolar microtubules. Acts as microtubule plus-end tracking protein that stabilizes centriolar microtubules and inhibits microtubule polymerization and extension from the distal ends of centrioles. Required for centriole elongation and for STIL-mediated centriole amplification. Required for the recruitment of CEP295 to the proximal end of new-born centrioles at the centriolar microtubule wall during early S phase in a PLK4-dependent manner. May be involved in the control of centriolar-microtubule growth by acting as a regulator of tubulin release. The sequence is that of Centrosomal P4.1-associated protein (CPAP) from Pan troglodytes (Chimpanzee).